Here is a 135-residue protein sequence, read N- to C-terminus: Ribosome-binding factor A (135 aa).

This sequence belongs to the RbfA family. In terms of assembly, monomer. Binds 30S ribosomal subunits, but not 50S ribosomal subunits or 70S ribosomes.

The protein localises to the cytoplasm. In terms of biological role, one of several proteins that assist in the late maturation steps of the functional core of the 30S ribosomal subunit. Associates with free 30S ribosomal subunits (but not with 30S subunits that are part of 70S ribosomes or polysomes). Required for efficient processing of 16S rRNA. May interact with the 5'-terminal helix region of 16S rRNA. This chain is Ribosome-binding factor A, found in Sinorhizobium fredii (strain NBRC 101917 / NGR234).